Here is a 432-residue protein sequence, read N- to C-terminus: Glutamyl-tRNA reductase (432 aa).

Substrate-binding positions include 49 to 52 (TCNR), Ser101, 106 to 108 (EPQ), and Gln112. Cys50 functions as the Nucleophile in the catalytic mechanism. 181–186 (GAGETI) is an NADP(+) binding site. The disordered stretch occupies residues 408–432 (PEKPGYRHPPVATPIVRTDDANPAP).

Belongs to the glutamyl-tRNA reductase family. In terms of assembly, homodimer.

It carries out the reaction (S)-4-amino-5-oxopentanoate + tRNA(Glu) + NADP(+) = L-glutamyl-tRNA(Glu) + NADPH + H(+). It functions in the pathway porphyrin-containing compound metabolism; protoporphyrin-IX biosynthesis; 5-aminolevulinate from L-glutamyl-tRNA(Glu): step 1/2. Catalyzes the NADPH-dependent reduction of glutamyl-tRNA(Glu) to glutamate 1-semialdehyde (GSA). The protein is Glutamyl-tRNA reductase of Xanthomonas campestris pv. campestris (strain 8004).